A 176-amino-acid polypeptide reads, in one-letter code: Adenine phosphoribosyltransferase (176 aa).

This sequence belongs to the purine/pyrimidine phosphoribosyltransferase family. Homodimer.

The protein resides in the cytoplasm. The catalysed reaction is AMP + diphosphate = 5-phospho-alpha-D-ribose 1-diphosphate + adenine. The protein operates within purine metabolism; AMP biosynthesis via salvage pathway; AMP from adenine: step 1/1. In terms of biological role, catalyzes a salvage reaction resulting in the formation of AMP, that is energically less costly than de novo synthesis. In Bacteroides thetaiotaomicron (strain ATCC 29148 / DSM 2079 / JCM 5827 / CCUG 10774 / NCTC 10582 / VPI-5482 / E50), this protein is Adenine phosphoribosyltransferase.